A 196-amino-acid polypeptide reads, in one-letter code: Adenylate kinase (196 aa).

ATP is bound at residue Gly-9–Thr-17.

The protein belongs to the archaeal adenylate kinase family.

Its subcellular location is the cytoplasm. It carries out the reaction AMP + ATP = 2 ADP. This is Adenylate kinase from Thermococcus sibiricus (strain DSM 12597 / MM 739).